A 525-amino-acid chain; its full sequence is Putative ribose/galactose/methyl galactoside import ATP-binding protein (525 aa).

Polar residues predominate over residues 1 to 15 (MFGSATANPPAQRNL). Positions 1-23 (MFGSATANPPAQRNLPSGDGDGG) are disordered. ABC transporter domains are found at residues 33–269 (LEIS…VGRE) and 279–523 (KPAG…SGHK). 65-72 (GENGAGKS) serves as a coordination point for ATP.

The protein belongs to the ABC transporter superfamily. Carbohydrate importer 2 (CUT2) (TC 3.A.1.2) family.

It is found in the cell inner membrane. It catalyses the reaction D-ribose(out) + ATP + H2O = D-ribose(in) + ADP + phosphate + H(+). The catalysed reaction is D-galactose(out) + ATP + H2O = D-galactose(in) + ADP + phosphate + H(+). Its function is as follows. Part of an ABC transporter complex involved in carbohydrate import. Could be involved in ribose, galactose and/or methyl galactoside import. Responsible for energy coupling to the transport system. The sequence is that of Putative ribose/galactose/methyl galactoside import ATP-binding protein from Pseudomonas syringae pv. syringae (strain B728a).